A 71-amino-acid polypeptide reads, in one-letter code: Antimicrobial peptide VpCT4 (71 aa).

The first 23 residues, methionine 1 to alanine 23, serve as a signal peptide directing secretion. Leucine 39 is modified (leucine amide). The propeptide occupies glycine 40–arginine 71.

Belongs to the non-disulfide-bridged peptide (NDBP) superfamily. Short antimicrobial peptide (group 4) family. As to expression, expressed by the venom gland.

Its subcellular location is the secreted. The protein resides in the target cell membrane. Its function is as follows. Antimicrobial peptide with potent activity against bacteria S.aureus (MIC=9.3 uM), weak activity against E.coli (MIC&gt;100 uM), and weak activity against pathogenic yeasts C.albicans (MIC=100 uM) and C.glabrata (MIC=100 uM). Is not very effective against P.aeruginosa (MIC&gt;300 uM). Also provokes high hemolysis on human erythrocytes (HC(50)=4.8 uM). The protein is Antimicrobial peptide VpCT4 of Mesomexovis punctatus (Scorpion).